The primary structure comprises 224 residues: Testis-expressed protein 30 (224 aa).

The sequence is that of Testis-expressed protein 30 (TEX30) from Bos taurus (Bovine).